The sequence spans 132 residues: Large ribosomal subunit protein uL14 (132 aa).

This sequence belongs to the universal ribosomal protein uL14 family. Part of the 50S ribosomal subunit. Forms a cluster with proteins L3 and L24e, part of which may contact the 16S rRNA in 2 intersubunit bridges.

In terms of biological role, binds to 23S rRNA. Forms part of two intersubunit bridges in the 70S ribosome. The protein is Large ribosomal subunit protein uL14 of Methanosarcina mazei (strain ATCC BAA-159 / DSM 3647 / Goe1 / Go1 / JCM 11833 / OCM 88) (Methanosarcina frisia).